Reading from the N-terminus, the 305-residue chain is MELIFLGTSAGVPTRTRNVTAILLNLQHPTQSGLWLFDCGEGTQHQLLHTAFNPGKLDKIFISHLHGDHLFGLPGLLCSRSMSGIIQPLTIYGPHGIREFVETALRISGSWTDYPLEIVEIGAGEIFDDGLRKVTAYPMEHPLECYGYRIEEHDKPGALNAQALKAAGVPPGPLFQELKAGKTIMLDDGRQINGADYLAAPVPGKALAIFGDTGPCDAALELAKGVDVMVHEATLDMAMEAKANSRGHSSTRQAAALAREAGVGKLIITHVSSRYDDKGCQHLLRECRSIFPATELANDFAVFNV.

7 residues coordinate Zn(2+): His-64, His-66, Asp-68, His-69, His-141, Asp-212, and His-270. Asp-68 (proton acceptor) is an active-site residue.

It belongs to the RNase Z family. RNase BN subfamily. In terms of assembly, homodimer. Zn(2+) is required as a cofactor.

Its function is as follows. Zinc phosphodiesterase, which has both exoribonuclease and endoribonuclease activities. The chain is Ribonuclease BN from Escherichia coli O127:H6 (strain E2348/69 / EPEC).